The primary structure comprises 1016 residues: Kinesin-like protein KIN-14K (1016 aa).

The Calponin-homology (CH) domain occupies 14-121; sequence ADRRAEVIEW…CLLVLRESVS (108 aa). The tract at residues 123-176 is disordered; sequence GLRDGTSKAPLRKKWRVPETGEPLVPGVAQGKTSPGEDKRNGLPDPKSQQKTPI. Residues 288–354 adopt a coiled-coil conformation; it reads VNGTNEENQM…EVMTSMHEQQ (67 aa). The 328-residue stretch at 481–808 folds into the Kinesin motor domain; sequence NIRVYCRVRP…LKFAERVSGV (328 aa). An ATP-binding site is contributed by 565–572; sequence GQTGSGKT. Residues 820–852 adopt a coiled-coil conformation; it reads KDIKELLEQVASLKDTIVRKDTEIEQLQLMKDK. 2 stretches are compositionally biased toward polar residues: residues 884–893 and 990–1004; these read NQQSQLSDPQ and KTPN…QLIG. Disordered regions lie at residues 884-912 and 971-1016; these read NQQS…DITP and LTKN…RWQK.

The protein belongs to the TRAFAC class myosin-kinesin ATPase superfamily. Kinesin family. KIN-14 subfamily.

The sequence is that of Kinesin-like protein KIN-14K from Oryza sativa subsp. japonica (Rice).